We begin with the raw amino-acid sequence, 187 residues long: Peptidoglycan-recognition protein 3 (187 aa).

A signal peptide spans 1-19; sequence MKAFLVALLISIELALVFA. 2 disulfide bridges follow: Cys21-Cys144 and Cys58-Cys64. The N-acetylmuramoyl-L-alanine amidase domain maps to 43–170; it reads KPLKYVIINH…RTIRQTNSPG (128 aa). Asn51 carries N-linked (GlcNAc...) asparagine glycosylation.

It belongs to the N-acetylmuramoyl-L-alanine amidase 2 family.

The protein resides in the secreted. Functionally, peptidoglycan-recognition protein probably involved in innate immunity by binding to peptidoglycans (PGN) of bacteria and activating the prophenoloxidase (proPO) cascade immune response. Binds to 1,3-beta-D-glucan and PGN. This chain is Peptidoglycan-recognition protein 3 (PGRP-3), found in Holotrichia diomphalia (Korean black chafer).